The primary structure comprises 114 residues: Large ribosomal subunit protein bL19 (114 aa).

Belongs to the bacterial ribosomal protein bL19 family.

This protein is located at the 30S-50S ribosomal subunit interface and may play a role in the structure and function of the aminoacyl-tRNA binding site. The sequence is that of Large ribosomal subunit protein bL19 from Thermoanaerobacter sp. (strain X514).